Reading from the N-terminus, the 154-residue chain is Protein phosphatase 1 regulatory subunit 27 (154 aa).

ANK repeat units follow at residues 63–92 (SGLAALHEAVLSGNLECVKLLVKYGADIHQ) and 96–125 (TGWTPLHIACSDGYPDIARYLISLGADRDA).

In terms of assembly, interacts with DYSF and PPP1CA.

Inhibits phosphatase activity of protein phosphatase 1 (PP1) complexes. The polypeptide is Protein phosphatase 1 regulatory subunit 27 (Ppp1r27) (Mus musculus (Mouse)).